The sequence spans 220 residues: Small ribosomal subunit protein mS23 (220 aa).

The protein belongs to the mitochondrion-specific ribosomal protein mS23 family. In terms of assembly, component of the mitochondrial small ribosomal subunit (mt-SSU). Mature yeast 74S mitochondrial ribosomes consist of a small (37S) and a large (54S) subunit. The 37S small subunit contains a 15S ribosomal RNA (15S mt-rRNA) and at least 32 different proteins. The 54S large subunit contains a 21S rRNA (21S mt-rRNA) and at least 45 different proteins.

The protein localises to the mitochondrion. Its function is as follows. Component of the mitochondrial ribosome (mitoribosome), a dedicated translation machinery responsible for the synthesis of mitochondrial genome-encoded proteins, including at least some of the essential transmembrane subunits of the mitochondrial respiratory chain. The mitoribosomes are attached to the mitochondrial inner membrane and translation products are cotranslationally integrated into the membrane. The polypeptide is Small ribosomal subunit protein mS23 (rsm25) (Schizosaccharomyces pombe (strain 972 / ATCC 24843) (Fission yeast)).